The primary structure comprises 1127 residues: MPAIKKNMRYGHPEGHTDVCFDDSGNFLVTCGSDGDIRIWESLDDDDPKSISIGEKAYSFALKNGKVVTAASNNAIQLHTFPDGEPDGILTRFTTNANHVVFNTDGTRIAAGSGDFLVKVLQVEDSTQQKTLRGHSAPVLSVSFDPKDIYLASASCDGSVRIWKISDQTCEAVLPLLEKCNDVFNAKSICRLAWQPKSGKFVAIPVGKAVHLYDRDSLKNICTLSDDFITQPVNIVAWSPCGQYLVAGSVDGCIVAWNIATKACLERIKHEKGYTICALAWHPHLPQIAYTDNEGNLGLLEDVCQGDVKQPSAKVSSAETKDYDELFDGDDDEDFLNGDMIGHEGAVNDEDDDDNFTALTGRPRNRGAIFDDDISSDVPSLKLVGNENPVVEDDQASSVQNFTSVASVKLSYNGPMPTPQQKPFQSGSTPVHLMHRFMVWNSVGVIRCYNDEQDNAIDVEFHDTSIHHAIHLTNSLNHTLADVSQEAVLLACETTEELASKLQCLHFSSWDTSKEWMVDMPKGENIQAICLGQGWVACATSALLIRIFSVGGVQKELISLFGPVVCMASHGEQLIVVYHRGMGFDGDQCLGVQLLELGKKKKQVLHGDPLPLSRKSYLSWLGFTAEGSPCYVDSEGIVRLLNRSLGDTWVPICNTREHCKGKSDHYWVVGIHENPQQVRCIPCKGSRFPPTLPRPAVAVLPFNLPYCQITTEKGQMEEQYWRSQIFSNHSDYLSKHGYECDENFKAEAQKMQQELLMKMFALSCKLEREFRCMELAEFMTQNVMNLAIKYASRSKRLILAQRLSEMALEKAAEQASAEQNEEEDEEEEDFRSRLTAGYSRTATEWGDSRAKPVKQDQYEENNEEEMEEEEKEQEEALESNTPTANPFNKSVKTPDVSESKLGAILSSNQGRVNPFKVSASQKSPAFASNSSRSTSILDNMGKFPRKPSASGSPSTSKSDSVIIKPLAPKAKSKQGQATLFHSVQAKPIAKKTTEEKKAVPTPPKAAADIAENKKPKTGFQLWLDENRPSILSENAGLDESEIIKEGMSRFRMLTSEERMLWTEKAKGDYPGEDGADAKKRKRPEQENMASNGCPQENTDSGIAAAKKHKPLGQSANNKLSAFAFKKE.

7 WD repeats span residues 11 to 50, 52 to 91, 92 to 131, 134 to 173, 184 to 223, 228 to 267, and 271 to 310; these read GHPE…DPKS, SIGE…GILT, RFTT…QQKT, GHSA…CEAV, FNAK…NICT, FITQ…CLER, and EKGY…DVKQ. Disordered regions lie at residues 811–1013 and 1064–1127; these read AAEQ…AENK and KAKG…FKKE. Residues 819-829 show a composition bias toward acidic residues; it reads QNEEEDEEEED. Residues 846–857 are compositionally biased toward basic and acidic residues; that stretch reads GDSRAKPVKQDQ. Residues 858 to 877 show a composition bias toward acidic residues; the sequence is YEENNEEEMEEEEKEQEEAL. 2 stretches are compositionally biased toward polar residues: residues 881-891 and 918-937; these read TPTANPFNKSV and SASQ…TSIL. Positions 948 to 960 are enriched in low complexity; the sequence is SASGSPSTSKSDS. A DNA-binding region (HMG box) is located at residues 1013–1076; that stretch reads KKPKTGFQLW…GDYPGEDGAD (64 aa). Polar residues predominate over residues 1087–1100; it reads NMASNGCPQENTDS.

Homodimer. In terms of tissue distribution, found in oocytes and in various other cells.

It localises to the nucleus. Its subcellular location is the nucleoplasm. The protein localises to the cytoplasm. In terms of biological role, core replisome component that acts as a replication initiation factor. Binds directly to the CMG complex and functions as a hub to recruit additional proteins to the replication fork. This is WD repeat and HMG-box DNA-binding protein 1 (wdhd1) from Xenopus laevis (African clawed frog).